We begin with the raw amino-acid sequence, 183 residues long: Ribosome rescue factor SmrB (183 aa).

Residues 98–173 enclose the Smr domain; the sequence is LDLHGLTQLQ…GDAALLVLIE (76 aa).

The protein belongs to the SmrB family. Associates with collided ribosomes, but not with correctly translating polysomes.

Functionally, acts as a ribosome collision sensor. Detects stalled/collided disomes (pairs of ribosomes where the leading ribosome is stalled and a second ribosome has collided with it) and endonucleolytically cleaves mRNA at the 5' boundary of the stalled ribosome. Stalled/collided disomes form a new interface (primarily via the 30S subunits) that binds SmrB. Cleaved mRNA becomes available for tmRNA ligation, leading to ribosomal subunit dissociation and rescue of stalled ribosomes. This Shigella sonnei (strain Ss046) protein is Ribosome rescue factor SmrB.